A 390-amino-acid polypeptide reads, in one-letter code: Chorismate synthase (390 aa).

Position 48 (Arg-48) interacts with NADP(+). Residues 126–128, Gly-286, 301–305, and Arg-328 each bind FMN; these read RAS and KPTSS.

It belongs to the chorismate synthase family. FMNH2 serves as cofactor.

The catalysed reaction is 5-O-(1-carboxyvinyl)-3-phosphoshikimate = chorismate + phosphate. It functions in the pathway metabolic intermediate biosynthesis; chorismate biosynthesis; chorismate from D-erythrose 4-phosphate and phosphoenolpyruvate: step 7/7. Its function is as follows. Catalyzes the anti-1,4-elimination of the C-3 phosphate and the C-6 proR hydrogen from 5-enolpyruvylshikimate-3-phosphate (EPSP) to yield chorismate, which is the branch point compound that serves as the starting substrate for the three terminal pathways of aromatic amino acid biosynthesis. This reaction introduces a second double bond into the aromatic ring system. The protein is Chorismate synthase of Sulfurisphaera tokodaii (strain DSM 16993 / JCM 10545 / NBRC 100140 / 7) (Sulfolobus tokodaii).